Consider the following 205-residue polypeptide: Protein phosphatase inhibitor 2 (205 aa).

Residues Met1–Ser44 are disordered. Residue Ala2 is modified to N-acetylalanine. The interval Lys12–Asn17 is required for binding PPP1CC. Positions Thr19–Ala29 are enriched in low complexity. A compositionally biased stretch (basic and acidic residues) spans Gln31–Ser44. Positions Lys43–Thr55 are required for binding PPP1CC. Ser44 bears the Phosphoserine; by ATM mark. Position 73 is a phosphothreonine; by GSK3 (Thr73). A phosphoserine mark is found at Ser87 and Ser89. 2 positions are modified to phosphothreonine: Thr96 and Thr116. Positions Leu104 to Met142 are disordered. A compositionally biased stretch (basic and acidic residues) spans Ser110–Glu120. 3 positions are modified to phosphoserine: Ser121, Ser122, and Ser130. Over residues Ser121 to Ser130 the composition is skewed to acidic residues. Over residues Pro131 to Met142 the composition is skewed to basic and acidic residues. Residues His147–Glu150 are required for binding PPP1CC catalytic center, displacing metal ions and inhibition of PPP1CC catalytic activity. A disordered region spans residues Lys163 to Ser205. The span at Asp167–Asp179 shows a compositional bias: acidic residues.

This sequence belongs to the protein phosphatase inhibitor 2 family. As to quaternary structure, heterodimer with PP1. Post-translationally, phosphorylation on Ser-44 by ATM activates PP1 by dissociating the PP1-PPP1R2 complex. Phosphorylation on Thr-73 by GSK3 activates PP1 by dissociating the PP1-PPP1R2 complex. As to expression, central nervous system.

In terms of biological role, inhibitor of protein-phosphatase 1. The protein is Protein phosphatase inhibitor 2 (Ppp1r2) of Rattus norvegicus (Rat).